Reading from the N-terminus, the 689-residue chain is Small ribosomal subunit protein mS39 (689 aa).

The N-terminal 37 residues, 1–37, are a transit peptide targeting the mitochondrion; the sequence is MAGVSAVRWLGLRSRLGQPLTGRRAGLCKQARSCRFY. At Lys126 the chain carries N6-acetyllysine. PPR repeat units lie at residues 149-183, 184-219, 255-289, 290-330, 331-367, 368-404, 412-446, 454-488, 489-523, and 572-606; these read IKDISEAALKERIELRKVKASVDMFDQLLQAGTTV, SLETTNSLLDLLCYFGDQEPSTDYHFQQTEQSEALE, NAHSYCTMIRGMVKHRAYEQALNLYTELLNNRLHA, DVYT…KVKP, NLQTFNTILKCLRRFHVFARSPALRILREMKAIGIEP, SLATYHHIIHVFDQPGDPLKRSSFIIYDIMNELMGKR, DDKFFQSAMSICSSLRDLELAYQVHGLLNTGDNWK, RNFYYSKFFDLICLMEQIDVTLKWYEDLIPSVYFP, HSQTLIHLLQALDVANRLEMIPKIWKDSKEYGHTF, and PATSLYCIAILFLRAGRTQEAWNMLELFRKHNKIP. The tract at residues 665–689 is disordered; that stretch reads NLTALTSDSDTDSSSDSDSDTSEGK. A compositionally biased stretch (acidic residues) spans 673–689; it reads SDTDSSSDSDSDTSEGK.

It belongs to the mitochondrion-specific ribosomal protein mS39 family. Component of the mitochondrial ribosome small subunit (28S) which comprises a 12S rRNA and about 30 distinct proteins. Associated with the 12S mitochondrial rRNA (12S mt-rRNA).

It is found in the mitochondrion. Functionally, mitochondrial RNA-binding protein that has a role in mitochondrial translation. The protein is Small ribosomal subunit protein mS39 (PTCD3) of Pongo abelii (Sumatran orangutan).